Consider the following 1143-residue polypeptide: uncharacterized protein (1143 aa).

The first 20 residues, 1-20, serve as a signal peptide directing secretion; sequence MKLLLLALILVLSNINLISG. Over 21 to 1121 the chain is Extracellular; the sequence is NGLVWPHPRL…PAAGGEDSSA (1101 aa). The segment covering 177–203 has biased composition (gly residues); the sequence is NSGGSWSSGGSGNSGGGWSSGGSGNSG. Positions 177–1120 are disordered; the sequence is NSGGSWSSGG…EPAAGGEDSS (944 aa). The segment covering 222–236 has biased composition (low complexity); the sequence is SSGGWTSGSHSSGSW. Over residues 237–283 the composition is skewed to gly residues; the sequence is SSGGGSGSSSGGQSSGSWSSGGGSSSGGHSSGSWSSGGGSSAGGGSS. Residues 284–296 show a composition bias toward low complexity; it reads SGSHSSGSWSSGG. Residues 297 to 330 show a composition bias toward gly residues; it reads SSSGGQSSGSWSSGGGSSSGGQSSGSWSSGGGSS. A compositionally biased stretch (low complexity) spans 331–368; that stretch reads SGSHSSGSWSSGGSSSGSHSSGSWSSGGSSSSSGNSGW. Over residues 374–392 the composition is skewed to gly residues; that stretch reads GNTGGNTGGNTGGNTGGQS. Residues 393–403 are compositionally biased toward low complexity; sequence SGNSGWMTASG. Composition is skewed to gly residues over residues 404 to 418 and 430 to 444; these read GNTG…GGQS. Composition is skewed to low complexity over residues 445-498 and 506-541; these read SGSS…TSSG and GSSS…SSGD. Gly residues-rich tracts occupy residues 555-573, 580-596, 604-622, 629-783, 790-843, and 851-905; these read GNTG…GGNS, GNSG…GGNS, and GNSG…GGAS. The span at 906-1059 shows a compositional bias: low complexity; the sequence is GAATGANSGA…GGNGASGAAN (154 aa). Residues 1062–1078 are compositionally biased toward polar residues; the sequence is SIVTPNDQNVSPLSNSD. A compositionally biased stretch (low complexity) spans 1094 to 1114; sequence PTSRAPTVTPTPTSSAEEPAA. The chain crosses the membrane as a helical span at residues 1122-1142; sequence ISKYSIQSFGIFVLSMIIYLV. Residue Ile-1143 is a topological domain, cytoplasmic.

The protein localises to the membrane. This is an uncharacterized protein from Dictyostelium discoideum (Social amoeba).